Here is a 145-residue protein sequence, read N- to C-terminus: Peptide methionine sulfoxide reductase MsrB (145 aa).

In terms of domain architecture, MsrB spans 4-127; the sequence is KEELRQRIGD…NSAALKFIPY (124 aa). The active-site Nucleophile is the C116.

The protein belongs to the MsrB Met sulfoxide reductase family.

The catalysed reaction is L-methionyl-[protein] + [thioredoxin]-disulfide + H2O = L-methionyl-(R)-S-oxide-[protein] + [thioredoxin]-dithiol. The chain is Peptide methionine sulfoxide reductase MsrB from Streptococcus equi subsp. zooepidemicus (strain H70).